Here is a 130-residue protein sequence, read N- to C-terminus: Small ribosomal subunit protein uS11 (130 aa).

The protein belongs to the universal ribosomal protein uS11 family. Part of the 30S ribosomal subunit. Interacts with proteins S7 and S18. Binds to IF-3.

Functionally, located on the platform of the 30S subunit, it bridges several disparate RNA helices of the 16S rRNA. Forms part of the Shine-Dalgarno cleft in the 70S ribosome. In Shewanella amazonensis (strain ATCC BAA-1098 / SB2B), this protein is Small ribosomal subunit protein uS11.